A 995-amino-acid polypeptide reads, in one-letter code: UPF0182 protein MUL_2505 (995 aa).

7 consecutive transmembrane segments (helical) span residues 18-38 (VLIL…RLID), 63-83 (FLVF…GLAL), 113-133 (LFGI…AQSY), 175-195 (FVAI…FGGI), 210-230 (IQLV…YWLN), 259-279 (KLIL…AIVL), and 287-307 (IGLV…PMIV). The tract at residues 900–947 (AATGIQPTEGGAPANVPPNNAPSPEALPGTPPSPPTAVPPAPEASVTL) is disordered. Pro residues predominate over residues 928–941 (GTPPSPPTAVPPAP).

This sequence belongs to the UPF0182 family.

It localises to the cell membrane. In Mycobacterium ulcerans (strain Agy99), this protein is UPF0182 protein MUL_2505.